A 331-amino-acid polypeptide reads, in one-letter code: MAVNLKGRSFLTLKDFTPAEIRYLLDLSHDLKAKKRAGILGDSLKGKNVVLLFEKTSTRTRCAFECGAAEEGAHVTFLTNSQMGKKESIEDTAKVLGRMYDGIEFRGFKQSTVEELAKHAGVPVWNGLTDADHPTQILADFLTIEEHAHKPLSEIKLVFTGDTRNNMSYALMYGAAKMGMHFVALGPDSLKPDEDILKEMQEYSKETGATIEFSSNVDEAVKGADVIYTDIWVSMGEDESLYPERVKLLTPYKVTREMMNKTGNKNTLFMHCLPSFHDEDTEVCKDMMDRLGLDIREVEDEVFRSKNSVVFDEAENRMHTIKAVMVATAGR.

Residues 57–60, Q82, R106, and 133–136 contribute to the carbamoyl phosphate site; these read STRT and HPTQ. L-ornithine contacts are provided by residues N166, D230, and 234–235; that span reads SM. Carbamoyl phosphate-binding positions include 272-273 and R317; that span reads CL.

This sequence belongs to the aspartate/ornithine carbamoyltransferase superfamily. OTCase family.

The protein resides in the cytoplasm. The catalysed reaction is carbamoyl phosphate + L-ornithine = L-citrulline + phosphate + H(+). It functions in the pathway amino-acid degradation; L-arginine degradation via ADI pathway; carbamoyl phosphate from L-arginine: step 2/2. Its function is as follows. Reversibly catalyzes the transfer of the carbamoyl group from carbamoyl phosphate (CP) to the N(epsilon) atom of ornithine (ORN) to produce L-citrulline. The sequence is that of Ornithine carbamoyltransferase, catabolic (arcB) from Clostridium perfringens (strain ATCC 13124 / DSM 756 / JCM 1290 / NCIMB 6125 / NCTC 8237 / Type A).